The following is a 57-amino-acid chain: Large ribosomal subunit protein bL32 (57 aa).

The segment at 1-21 is disordered; the sequence is MAVQQRRSSKHRRDKRRSHDA. A compositionally biased stretch (basic residues) spans 7-18; sequence RSSKHRRDKRRS.

The protein belongs to the bacterial ribosomal protein bL32 family.

In Mycoplasma pneumoniae (strain ATCC 29342 / M129 / Subtype 1) (Mycoplasmoides pneumoniae), this protein is Large ribosomal subunit protein bL32 (rpmF).